A 332-amino-acid polypeptide reads, in one-letter code: Holliday junction branch migration complex subunit RuvB (332 aa).

Residues 1-181 (MARILDNNVM…FGITGHMEYY (181 aa)) are large ATPase domain (RuvB-L). ATP contacts are provided by residues L20, R21, G62, K65, T66, T67, 128-130 (EDF), R171, Y181, and R218. T66 serves as a coordination point for Mg(2+). A small ATPAse domain (RuvB-S) region spans residues 182-252 (QEKDLTEIVE…ITDRALTMLD (71 aa)). Residues 255–332 (REGLDYIDQK…RHLGYPYQNT (78 aa)) form a head domain (RuvB-H) region. R291, R310, R312, and R315 together coordinate DNA.

Belongs to the RuvB family. Homohexamer. Forms an RuvA(8)-RuvB(12)-Holliday junction (HJ) complex. HJ DNA is sandwiched between 2 RuvA tetramers; dsDNA enters through RuvA and exits via RuvB. An RuvB hexamer assembles on each DNA strand where it exits the tetramer. Each RuvB hexamer is contacted by two RuvA subunits (via domain III) on 2 adjacent RuvB subunits; this complex drives branch migration. In the full resolvosome a probable DNA-RuvA(4)-RuvB(12)-RuvC(2) complex forms which resolves the HJ.

It is found in the cytoplasm. It carries out the reaction ATP + H2O = ADP + phosphate + H(+). In terms of biological role, the RuvA-RuvB-RuvC complex processes Holliday junction (HJ) DNA during genetic recombination and DNA repair, while the RuvA-RuvB complex plays an important role in the rescue of blocked DNA replication forks via replication fork reversal (RFR). RuvA specifically binds to HJ cruciform DNA, conferring on it an open structure. The RuvB hexamer acts as an ATP-dependent pump, pulling dsDNA into and through the RuvAB complex. RuvB forms 2 homohexamers on either side of HJ DNA bound by 1 or 2 RuvA tetramers; 4 subunits per hexamer contact DNA at a time. Coordinated motions by a converter formed by DNA-disengaged RuvB subunits stimulates ATP hydrolysis and nucleotide exchange. Immobilization of the converter enables RuvB to convert the ATP-contained energy into a lever motion, pulling 2 nucleotides of DNA out of the RuvA tetramer per ATP hydrolyzed, thus driving DNA branch migration. The RuvB motors rotate together with the DNA substrate, which together with the progressing nucleotide cycle form the mechanistic basis for DNA recombination by continuous HJ branch migration. Branch migration allows RuvC to scan DNA until it finds its consensus sequence, where it cleaves and resolves cruciform DNA. The polypeptide is Holliday junction branch migration complex subunit RuvB (Streptococcus pyogenes serotype M1).